The primary structure comprises 155 residues: MIFGHIAQPNPCRLPAAIEKALDFLRATDFNALEPGVVEIDGKNIYTQIIDLTTREAVVNRPEVHRRYIDIQFLAWGEEKIGIAIDTGNNKVSESLLEQRNIIFYHDSEHESFIEMIPGSYAIFFPQDVHRPGCIMQTASEIRKIVVKVALTALN.

The protein belongs to the TabA/YiaL family.

In Escherichia coli (strain K12), this protein is Protein YiaL (yiaL).